The sequence spans 88 residues: Large ribosomal subunit protein bL27 (88 aa).

This sequence belongs to the bacterial ribosomal protein bL27 family.

The chain is Large ribosomal subunit protein bL27 from Mycobacterium leprae (strain TN).